We begin with the raw amino-acid sequence, 459 residues long: tRNA modification GTPase MnmE (459 aa).

(6S)-5-formyl-5,6,7,8-tetrahydrofolate is bound by residues Arg23, Glu88, and Arg127. One can recognise a TrmE-type G domain in the interval 223–381 (GLSVVIVGKP…IKNCIKELFF (159 aa)). Asn233 contacts K(+). Residues 233-238 (NVGKSS), 252-258 (TDIPGTT), and 277-280 (DTAG) contribute to the GTP site. A Mg(2+)-binding site is contributed by Ser237. K(+)-binding residues include Thr252, Ile254, and Thr257. Thr258 is a Mg(2+) binding site. Lys459 serves as a coordination point for (6S)-5-formyl-5,6,7,8-tetrahydrofolate.

The protein belongs to the TRAFAC class TrmE-Era-EngA-EngB-Septin-like GTPase superfamily. TrmE GTPase family. Homodimer. Heterotetramer of two MnmE and two MnmG subunits. The cofactor is K(+).

Its subcellular location is the cytoplasm. Functionally, exhibits a very high intrinsic GTPase hydrolysis rate. Involved in the addition of a carboxymethylaminomethyl (cmnm) group at the wobble position (U34) of certain tRNAs, forming tRNA-cmnm(5)s(2)U34. This is tRNA modification GTPase MnmE from Clostridium kluyveri (strain ATCC 8527 / DSM 555 / NBRC 12016 / NCIMB 10680 / K1).